Consider the following 2768-residue polypeptide: Thyroglobulin (2768 aa).

The first 19 residues, 1 to 19, serve as a signal peptide directing secretion; sequence MALVLEIFTLLASICWVSA. Tyrosine 24 bears the Iodotyrosine; alternate mark. At tyrosine 24 the chain carries Sulfotyrosine; alternate. Tyrosine 24 carries the thyroxine; alternate modification. Triiodothyronine; alternate is present on tyrosine 24. Thyroglobulin type-1 domains follow at residues 31–92, 93–160, 161–297, and 298–358; these read LRPC…PVAC, LSFC…PKRC, PRSC…RFRC, and PTKC…PPSC. Disulfide bonds link cysteine 34–cysteine 52, cysteine 63–cysteine 70, cysteine 72–cysteine 92, cysteine 96–cysteine 120, cysteine 131–cysteine 138, cysteine 140–cysteine 160, cysteine 164–cysteine 183, cysteine 194–cysteine 235, cysteine 237–cysteine 297, cysteine 301–cysteine 319, cysteine 330–cysteine 336, cysteine 338–cysteine 358, cysteine 364–cysteine 620, cysteine 408–cysteine 608, cysteine 631–cysteine 636, cysteine 638–cysteine 658, cysteine 662–cysteine 687, and cysteine 698–cysteine 703. A glycan (N-linked (GlcNAc...) asparagine) is linked at asparagine 76. Iodotyrosine is present on tyrosine 108. Asparagine 110 carries N-linked (GlcNAc...) asparagine glycosylation. Tyrosine 149 is modified (iodotyrosine; alternate). Tyrosine 149 is modified (diiodotyrosine; alternate). Asparagine 198 carries an N-linked (GlcNAc...) asparagine glycan. Iodotyrosine occurs at positions 234 and 258. Asparagine 484 and asparagine 529 each carry an N-linked (GlcNAc...) asparagine glycan. The disordered stretch occupies residues 521 to 545; the sequence is PLSVGLDSNSSTGTPEAAKKDGTMN. Thyroglobulin type-1 domains lie at 605 to 658, 659 to 726, 727 to 921, 922 to 1073, 1074 to 1145, and 1146 to 1210; these read SQTC…QPRC, PTDC…PKKC, PTPC…LPTC, PGSC…IPQC, PTTC…SAQC, and PSLC…QPAC. Tyrosine 704 carries the post-translational modification Iodotyrosine; alternate. A Thyroxine; alternate modification is found at tyrosine 704. Tyrosine 704 is subject to Triiodothyronine; alternate. Tyrosine 704 is modified (diiodotyrosine; alternate). 16 disulfides stabilise this stretch: cysteine 705–cysteine 726, cysteine 730–cysteine 763, cysteine 774–cysteine 898, cysteine 900–cysteine 921, cysteine 925–cysteine 1031, cysteine 1042–cysteine 1049, cysteine 1051–cysteine 1073, cysteine 1077–cysteine 1108, cysteine 1126–cysteine 1145, cysteine 1149–cysteine 1169, cysteine 1181–cysteine 1188, cysteine 1190–cysteine 1210, cysteine 1215–cysteine 1264, cysteine 1231–cysteine 1245, cysteine 1306–cysteine 1356, and cysteine 1331–cysteine 1347. The N-linked (GlcNAc...) asparagine glycan is linked to asparagine 748. Tyrosine 785 carries the post-translational modification Iodotyrosine. An N-linked (GlcNAc...) asparagine glycan is attached at asparagine 816. At tyrosine 866 the chain carries Iodotyrosine; alternate. Tyrosine 866 bears the Diiodotyrosine; alternate mark. Residue tyrosine 883 is modified to Diiodotyrosine. An N-linked (GlcNAc...) asparagine glycan is attached at asparagine 947. An Iodotyrosine; alternate modification is found at tyrosine 992. At tyrosine 992 the chain carries Diiodotyrosine; alternate. N-linked (GlcNAc...) asparagine glycosylation occurs at asparagine 1220. Tyrosine 1310 is subject to Iodotyrosine. Thyroxine is present on tyrosine 1310. N-linked (GlcNAc...) asparagine glycosylation is found at asparagine 1348, asparagine 1349, and asparagine 1365. 9 disulfide bridges follow: cysteine 1440-cysteine 1459, cysteine 1462-cysteine 1473, cysteine 1476-cysteine 1490, cysteine 1493-cysteine 1510, cysteine 1514-cysteine 1523, cysteine 1543-cysteine 1565, cysteine 1603-cysteine 1627, cysteine 1607-cysteine 1613, and cysteine 1639-cysteine 1662. Type II repeat units lie at residues 1456–1469, 1470–1486, and 1487–1503; these read GLGC…SYSQ, DEEC…EQAG, and SLAC…ISAG. Tyrosine 1467 carries the iodotyrosine; alternate modification. Position 1467 is a diiodotyrosine; alternate (tyrosine 1467). Residues 1511–1565 enclose the Thyroglobulin type-1 11 domain; the sequence is VTDCQRNEAGLQCDQNGQYRASQKDRGSGKAFCVDGEGRRLPWWETEAPLEDSQC. The stretch at 1603 to 1723 is one Type IIIA repeat; the sequence is CLTDCTEDEA…GANLTDAHLF (121 aa). N-linked (GlcNAc...) asparagine glycosylation occurs at asparagine 1716. 4 disulfides stabilise this stretch: cysteine 1724–cysteine 1749, cysteine 1728–cysteine 1734, cysteine 1733–cysteine 1835, and cysteine 1760–cysteine 1777. A Type IIIB repeat occupies 1724–1892; that stretch reads CLLACDRDLC…LFSAQQANLW (169 aa). N-linked (GlcNAc...) asparagine glycosylation is found at asparagine 1774 and asparagine 1869. Cystine bridges form between cysteine 1893–cysteine 1919, cysteine 1897–cysteine 1904, cysteine 1928–cysteine 1939, cysteine 1996–cysteine 2024, cysteine 2000–cysteine 2006, cysteine 2005–cysteine 2076, and cysteine 2035–cysteine 2048. Residues 1893–1995 form a Type IIIA repeat; the sequence is CLSRCVQEHS…EKSISNGFFE (103 aa). A Type IIIB repeat occupies 1996–2129; sequence CERRCDADPC…TSNFSAVRDL (134 aa). N-linked (GlcNAc...) asparagine glycosylation occurs at asparagine 2013. N-linked (GlcNAc...) asparagine glycosylation is present at asparagine 2122. 3 cysteine pairs are disulfide-bonded: cysteine 2130/cysteine 2154, cysteine 2134/cysteine 2140, and cysteine 2163/cysteine 2172. One copy of the Type IIIA repeat lies at 2130-2187; sequence CLSECSQHEACLITTLQTQPGAVRCMFYADTQSCTHSLQGQNCRLLLREEATHIYRKP. Position 2184 is an iodotyrosine (tyrosine 2184). Positions 2188–2768 are cholinesterase-like (ChEL); sequence GISLLSYEAS…QEPGSKTYSK (581 aa). A glycan (N-linked (GlcNAc...) asparagine) is linked at asparagine 2250. Cysteine 2264 and cysteine 2281 are disulfide-bonded. An N-linked (GlcNAc...) asparagine glycan is attached at asparagine 2295. Cysteines 2442 and 2453 form a disulfide. The residue at position 2540 (tyrosine 2540) is an Iodotyrosine. Residue tyrosine 2573 is modified to Iodotyrosine; alternate. Tyrosine 2573 bears the Thyroxine; alternate mark. Tyrosine 2573 bears the Triiodothyronine; alternate mark. Diiodotyrosine; alternate is present on tyrosine 2573. Asparagine 2582 carries N-linked (GlcNAc...) asparagine glycosylation. Tyrosine 2587 and tyrosine 2617 each carry iodotyrosine. A disulfide bond links cysteine 2591 and cysteine 2715. At tyrosine 2697 the chain carries Diiodotyrosine. The tract at residues 2727-2768 is disordered; it reads TSADGAKGGQSAESEEEELTAGSGLREDLLSLQEPGSKTYSK. Serine 2749 carries an O-linked (Xyl...) (chondroitin sulfate) serine glycan. Tyrosine 2766 bears the Iodotyrosine; alternate mark. Position 2766 is a thyroxine; alternate (tyrosine 2766). Tyrosine 2766 is modified (triiodothyronine; alternate). Diiodotyrosine; alternate is present on tyrosine 2766.

The protein belongs to the type-B carboxylesterase/lipase family. Monomer. Homodimer (via ChEL region); occurs in the endoplasmic reticulum and is required for export to the Golgi apparatus. Homooligomer; disulfide-linked; stored in this form in the thyroid follicle lumen. Post-translationally, iodinated on tyrosine residues by TPO. There are 4 pairs of iodinated tyrosines used for coupling: acceptor Tyr-24 is coupled to donor Tyr-149 or Tyr-234, acceptor Tyr-2573 is coupled to donor Tyr-2540, acceptor Tyr-2766 in monomer 1 is coupled to donor Tyr-2766 in monomer 2 and acceptor Tyr-1310 in monomer 1 is coupled to donor Tyr-108 in monomer 2. In terms of processing, sulfated tyrosines are desulfated during iodination. Undergoes sequential proteolysis by cathepsins to release thyroxine (T4) and triiodothyronine (T3) hormones. In the thyroid follicle lumen, cross-linked TG (storage form) is solubilized by limited proteolysis mediated by cathepsins CTSB and/or CTSL. Partially cleaved TG is further processed by CTSK/cathepsin K and/or CTSL resulting in the release of T4. Following endocytosis, further processing occurs leading to the release of T3 and more T4 hormones. Specifically expressed in the thyroid gland.

It is found in the secreted. Acts as a substrate for the production of iodinated thyroid hormones thyroxine (T4) and triiodothyronine (T3). The synthesis of T3 and T4 involves iodination of selected tyrosine residues of TG/thyroglobulin followed by their oxidative coupling in the thyroid follicle lumen. Following TG re-internalization and lysosomal-mediated proteolysis, T3 and T4 are released from the polypeptide backbone leading to their secretion into the bloodstream. One dimer produces 7 thyroid hormone molecules. The polypeptide is Thyroglobulin (Homo sapiens (Human)).